A 314-amino-acid chain; its full sequence is Protein phosphatase PTC7 homolog fig (314 aa).

The PPM-type phosphatase domain maps to 43–309 (PYLVTVVQGR…DDITLILSSV (267 aa)). 3 residues coordinate Mn(2+): Asp-87, Gly-88, and Asp-232.

Belongs to the PP2C family. Mg(2+) serves as cofactor. Requires Mn(2+) as cofactor.

The enzyme catalyses O-phospho-L-seryl-[protein] + H2O = L-seryl-[protein] + phosphate. It carries out the reaction O-phospho-L-threonyl-[protein] + H2O = L-threonyl-[protein] + phosphate. The chain is Protein phosphatase PTC7 homolog fig from Drosophila sechellia (Fruit fly).